The primary structure comprises 497 residues: Peptidoglycan endopeptidase RipA (497 aa).

A signal peptide spans 1–39 (MRRTVRALATRVHGRVCAVPLVVGMLLATALYGGGPAAA). The segment covering 177–192 (ARLAKEKADQAARDAE) has biased composition (basic and acidic residues). Disordered stretches follow at residues 177–198 (ARLA…QDNA) and 253–297 (APAA…GQNW). Positions 255 to 273 (AAAPAPVPNSAPAPVPGAQ) are enriched in pro residues. Residues 365-497 (REAVEYVIRR…TPYVTRLIEY (133 aa)) form the NlpC/P60 domain. Cys-408 functions as the Nucleophile in the catalytic mechanism. Catalysis depends on His-457, which acts as the Proton acceptor. Residue Glu-469 is part of the active site.

This sequence belongs to the peptidase C40 family. As to quaternary structure, monomer.

Its subcellular location is the secreted. Peptidoglycan endopeptidase that cleaves the bond between D-glutamate and meso-diaminopimelate. Binds and degrades high-molecular weight peptidoglycan. Required for normal separation of daughter cells after cell division and for cell wall integrity. The chain is Peptidoglycan endopeptidase RipA (ripA) from Mycolicibacterium smegmatis (strain ATCC 700084 / mc(2)155) (Mycobacterium smegmatis).